The following is a 350-amino-acid chain: uncharacterized protein (350 aa).

The Mn(2+) site is built by aspartate 214, aspartate 225, histidine 289, glutamate 318, and glutamate 332.

It belongs to the peptidase M24B family. Mn(2+) is required as a cofactor.

This is an uncharacterized protein from Staphylococcus saprophyticus subsp. saprophyticus (strain ATCC 15305 / DSM 20229 / NCIMB 8711 / NCTC 7292 / S-41).